The primary structure comprises 270 residues: DNA adenine methylase (270 aa).

4 residues coordinate S-adenosyl-L-methionine: tryptophan 10, lysine 14, aspartate 54, and aspartate 181.

Belongs to the N(4)/N(6)-methyltransferase family.

The enzyme catalyses a 2'-deoxyadenosine in DNA + S-adenosyl-L-methionine = an N(6)-methyl-2'-deoxyadenosine in DNA + S-adenosyl-L-homocysteine + H(+). Functionally, an alpha subtype methylase, recognizes the double-stranded sequence 5'-GATC-3' and methylates A-2. Overexpression leads to hypermutability. May be involved in methyl-directed DNA mismatch repair, initiation of chromosome replication and gene expression. In Serratia marcescens, this protein is DNA adenine methylase.